Here is an 86-residue protein sequence, read N- to C-terminus: Small ribosomal subunit protein bS16 (86 aa).

Belongs to the bacterial ribosomal protein bS16 family.

The protein is Small ribosomal subunit protein bS16 of Xylella fastidiosa (strain M23).